The primary structure comprises 162 residues: MSLIALPLRLLRLLPAITSTWVLAFALDEHLIFGTWVQPSLRESANANLPAWWTTGGLRWRWILIVVYPINYALGVVNLFVGRDELRATGAMSWYTIGLLFSLAHMGYMRTALDRIGMIERGVPRGNVTSSMESWLRMNRTRALVTDLPAWICFVTAALKAL.

The signal sequence occupies residues 1–26 (MSLIALPLRLLRLLPAITSTWVLAFA). 2 helical membrane-spanning segments follow: residues 62–82 (WILI…LFVG) and 89–109 (TGAM…MGYM). N-linked (GlcNAc...) asparagine glycosylation is found at asparagine 127 and asparagine 139.

Belongs to the epoxidase xenD family.

It localises to the membrane. It participates in mycotoxin biosynthesis. In terms of biological role, epoxidase; part of the gene cluster that mediates the biosynthesis of pyrrocidines, fungal natural products containing a macrocyclic para-cyclophane connected to a decahydrofluorene ring system that show potent antibiotic activities toward Gram-negative bacteria. Within the pathway, pydX functions synergistically with pydB, pydE and pydZ to form the cyclophane. The pathway begins with the PKS-NRPS pydA which, with the help of the trans-enoyl reductase pydC, synthesizes the polyketide-tyrosyl acyl thioester product which can be reductively off-loaded by the terminal reductase (R) domain in pydA. The alpha/beta hydrolase pydG is then required to catalyze the subsequent Knoevenagel condensation that affords the 3-pyrrolin-2-one ring, whereas the four proteins pydB, pydE, pydX and pydZ then function synergistically to form the cyclophane. PydB and the membrane-bound pydX and pydZ are lipid-binding proteins that can sequester and mold the pdyG product into the inverse S-shape. Binding of the medium chain reductase pydE to the complex would trigger the cascade oxidative cyclization. PydY is involved in the Diels-Alder cycloaddition that forms the decahydrofluorene core. Additional non-enzymatic hydroxylation yields pyrrocidine A2 which can be further reduced into pyrrocidine B by an endogenous reductase. The chain is Epoxidase pydX from Acremonium sp.